The primary structure comprises 257 residues: Ethanolamine ammonia-lyase small subunit (257 aa).

Adenosylcob(III)alamin is bound by residues valine 153, glutamate 174, and cysteine 203.

This sequence belongs to the EutC family. The basic unit is a heterodimer which dimerizes to form tetramers. The heterotetramers trimerize; 6 large subunits form a core ring with 6 small subunits projecting outwards. The cofactor is adenosylcob(III)alamin.

The protein resides in the bacterial microcompartment. It catalyses the reaction ethanolamine = acetaldehyde + NH4(+). It participates in amine and polyamine degradation; ethanolamine degradation. In terms of biological role, catalyzes the deamination of various vicinal amino-alcohols to oxo compounds. Allows this organism to utilize ethanolamine as the sole source of nitrogen and carbon in the presence of external vitamin B12. This Rhodococcus erythropolis (Arthrobacter picolinophilus) protein is Ethanolamine ammonia-lyase small subunit.